We begin with the raw amino-acid sequence, 707 residues long: DNA ligase (707 aa).

NAD(+) contacts are provided by residues Asp36 to Asp40, Ser85 to Leu86, and Glu116. Residue Lys118 is the N6-AMP-lysine intermediate of the active site. Residues Arg139, Glu180, Lys298, and Lys322 each contribute to the NAD(+) site. Cys416, Cys419, Cys434, and Cys440 together coordinate Zn(2+). Positions Ala613–Val707 constitute a BRCT domain.

The protein belongs to the NAD-dependent DNA ligase family. LigA subfamily. Mg(2+) serves as cofactor. Mn(2+) is required as a cofactor.

The enzyme catalyses NAD(+) + (deoxyribonucleotide)n-3'-hydroxyl + 5'-phospho-(deoxyribonucleotide)m = (deoxyribonucleotide)n+m + AMP + beta-nicotinamide D-nucleotide.. In terms of biological role, DNA ligase that catalyzes the formation of phosphodiester linkages between 5'-phosphoryl and 3'-hydroxyl groups in double-stranded DNA using NAD as a coenzyme and as the energy source for the reaction. It is essential for DNA replication and repair of damaged DNA. This chain is DNA ligase, found in Nitrosospira multiformis (strain ATCC 25196 / NCIMB 11849 / C 71).